A 540-amino-acid polypeptide reads, in one-letter code: Chaperonin GroEL (540 aa).

ATP is bound by residues 29 to 32 (TLGP), 86 to 90 (DGTTT), glycine 413, 476 to 478 (NAA), and aspartate 492.

This sequence belongs to the chaperonin (HSP60) family. As to quaternary structure, forms a cylinder of 14 subunits composed of two heptameric rings stacked back-to-back. Interacts with the co-chaperonin GroES.

It is found in the cytoplasm. The enzyme catalyses ATP + H2O + a folded polypeptide = ADP + phosphate + an unfolded polypeptide.. Functionally, together with its co-chaperonin GroES, plays an essential role in assisting protein folding. The GroEL-GroES system forms a nano-cage that allows encapsulation of the non-native substrate proteins and provides a physical environment optimized to promote and accelerate protein folding. This is Chaperonin GroEL from Streptococcus pneumoniae (strain ATCC 700669 / Spain 23F-1).